A 98-amino-acid chain; its full sequence is Parvalbumin beta 1 (98 aa).

An N-acetylserine modification is found at Ser1. EF-hand domains lie at 32 to 67 and 67 to 98; these read KIGLAGKKVFAIIDQDKSDFVEEDELKLFLQVFSAG and GARALTDAETKAGDSDGDGKIGVDEFAQMIKG. Asp45, Asp47, Ser49, Phe51, Glu53, Glu56, Asp80, Asp82, Asp84, Lys86, and Glu91 together coordinate Ca(2+).

The protein belongs to the parvalbumin family.

In muscle, parvalbumin is thought to be involved in relaxation after contraction. It binds two calcium ions. The sequence is that of Parvalbumin beta 1 from Macruronus magellanicus (Patagonian grenadier).